Reading from the N-terminus, the 171-residue chain is Calcium channel flower homolog (171 aa).

Residues 1–31 (MSGSVAAGAAAGPVPPAQEEGMTWWYRWLCR) are Cytoplasmic-facing. The helical transmembrane segment at 32-52 (LAGVLGAVSCAISGLFNCVTI) threads the bilayer. Over 53 to 56 (HPLN) the chain is Extracellular. Residues 57-77 (IAAGVWMIMNAFILLLCEAPF) traverse the membrane as a helical segment. The Cytoplasmic portion of the chain corresponds to 78 to 101 (CCQFVEFANTVAEKVDRLRSWQKA). A helical transmembrane segment spans residues 102–122 (VFYCGMAIVPIVMSLTLTTLL). Topologically, residues 123-124 (GN) are extracellular. Residues 125-141 (AIAFATGVLYGLSALGK) form a helical membrane-spanning segment. The Cytoplasmic segment spans residues 142-171 (KGDAISYARIQQQRQQADEEKLAETFEGEL).

Belongs to the calcium channel flower family. As to quaternary structure, interacts with adaptor protein complex 2 (AP-2). Expressed in calyces in the brain (at protein level). Detected in cultured hippocampal neurons (at protein level).

It is found in the cell membrane. Its subcellular location is the cytoplasmic vesicle. It localises to the secretory vesicle. The protein resides in the synaptic vesicle. The protein localises to the golgi apparatus. It is found in the vesicle. Its function is as follows. Transmembrane protein which mediates synaptic endocytosis and fitness-based cell culling. In response to different stimulus strengths, controls two major modes of synaptic vesicle (SV) retrieval in hippocampal neurons; Clathrin-mediated endocytosis (CME) in response to mild stimulation and activity-dependent bulk endocytosis (ADBE) in response to strong stimulation. In cytotoxic T-lymphoocytes (CTLs) facilitates calcium-dependent endocytosis of cytotoxic granules (CGs) at the immuno synapse. Different isoforms work as fitness fingerprints in 'loser' and 'winner' cells and thereby mediate win/lose decisions as part of the cell competition process. The sequence is that of Calcium channel flower homolog (Cacfd1) from Rattus norvegicus (Rat).